Consider the following 206-residue polypeptide: Small ribosomal subunit protein uS2 (206 aa).

Belongs to the universal ribosomal protein uS2 family.

The protein is Small ribosomal subunit protein uS2 of Pyrobaculum neutrophilum (strain DSM 2338 / JCM 9278 / NBRC 100436 / V24Sta) (Thermoproteus neutrophilus).